Reading from the N-terminus, the 471-residue chain is MNPNQKLFALSGVAIALSVLNLLIGISNVGLNVSLHLKGAGTKQEENLTCTTITQNNTTVVENTYVNNTTIITKEPEFRAPSYLLLNKSLCNVEGWVVVAKDNAIRFGESEQIIVTREPYVSCDPSGCKMYALHQGTTIRNKHSNGTIHDRTAFRGLISTHLGTPPTVSNSDFICVGWSSTSCHDGIGRMTICVQGNNDNATATVYYNRRLTTTIKTWARNILRTQESECVCHNGTCAVVMTDGSASSQAYTKVMYFHKGLVIKEEPLKGSAKHIEECSCYGHNQKITCVCRDNWQGANRPIIEIDMTTLEHTSRYVCTGVLTDTSRPGDKPSGDCSNPITGSPGAPGVKGFGFLNGDNTWLGRTISPRSRSGFEMLKIPNAGTDPNSKIVERQEIVDNNNWSGYSGSFIDYWDDGNECYNPCFYVELIRGRPEEAKYVWWTSNSLIALCGSPFPVGSGSFPDGAQIQYFS.

At 1-6 the chain is on the intravirion side; sequence MNPNQK. The helical transmembrane segment at 7 to 27 threads the bilayer; that stretch reads LFALSGVAIALSVLNLLIGIS. Residues 11 to 33 form an involved in apical transport and lipid raft association region; sequence SGVAIALSVLNLLIGISNVGLNV. At 28–471 the chain is on the virion surface side; it reads NVGLNVSLHL…PDGAQIQYFS (444 aa). N-linked (GlcNAc...) asparagine; by host glycosylation is found at Asn32, Asn47, Asn56, Asn57, Asn67, Asn68, and Asn87. Positions 36–87 are hypervariable stalk region; it reads HLKGAGTKQEENLTCTTITQNNTTVVENTYVNNTTIITKEPEFRAPSYLLLN. A head of neuraminidase region spans residues 90 to 471; sequence LCNVEGWVVV…PDGAQIQYFS (382 aa). Intrachain disulfides connect Cys91/Cys419, Cys123/Cys128, Cys183/Cys230, Cys232/Cys237, Cys278/Cys291, Cys280/Cys289, Cys318/Cys336, and Cys423/Cys450. Arg117 provides a ligand contact to substrate. N-linked (GlcNAc...) asparagine; by host glycosylation is present at Asn145. Asp150 acts as the Proton donor/acceptor in catalysis. Arg151 is a substrate binding site. N-linked (GlcNAc...) asparagine; by host glycans are attached at residues Asn200 and Asn234. 276 to 277 contacts substrate; that stretch reads EE. Arg292 serves as a coordination point for substrate. Residues Asp293, Gly297, and Asp324 each coordinate Ca(2+). Substrate is bound at residue Arg371. Asn401 carries N-linked (GlcNAc...) asparagine; by host glycosylation. Tyr405 (nucleophile) is an active-site residue.

Belongs to the glycosyl hydrolase 34 family. As to quaternary structure, homotetramer. The cofactor is Ca(2+). N-glycosylated.

The protein localises to the virion membrane. It is found in the host apical cell membrane. It carries out the reaction Hydrolysis of alpha-(2-&gt;3)-, alpha-(2-&gt;6)-, alpha-(2-&gt;8)- glycosidic linkages of terminal sialic acid residues in oligosaccharides, glycoproteins, glycolipids, colominic acid and synthetic substrates.. With respect to regulation, inhibited by the neuraminidase inhibitors zanamivir (Relenza) and oseltamivir (Tamiflu). These drugs interfere with the release of progeny virus from infected cells and are effective against all influenza strains. Resistance to neuraminidase inhibitors is quite rare. Functionally, catalyzes the removal of terminal sialic acid residues from viral and cellular glycoconjugates. Cleaves off the terminal sialic acids on the glycosylated HA during virus budding to facilitate virus release. Additionally helps virus spread through the circulation by further removing sialic acids from the cell surface. These cleavages prevent self-aggregation and ensure the efficient spread of the progeny virus from cell to cell. Otherwise, infection would be limited to one round of replication. Described as a receptor-destroying enzyme because it cleaves a terminal sialic acid from the cellular receptors. May facilitate viral invasion of the upper airways by cleaving the sialic acid moieties on the mucin of the airway epithelial cells. Likely to plays a role in the budding process through its association with lipid rafts during intracellular transport. May additionally display a raft-association independent effect on budding. Plays a role in the determination of host range restriction on replication and virulence. Sialidase activity in late endosome/lysosome traffic seems to enhance virus replication. The sequence is that of Neuraminidase from Aves (Horse).